The sequence spans 1683 residues: A-kinase anchor protein SPHKAP (1683 aa).

2 stretches are compositionally biased toward polar residues: residues 1-14 and 289-301; these read MDVNSRLSVQSNVE and AENTALQSLNPSA. Disordered stretches follow at residues 1-30, 275-320, and 582-601; these read MDVNSRLSVQSNVESPLMPEDSEPQQITSS, RMPS…ATNY, and LLPTPGASEERSSIGSLVTE. The PKA-RII subunit binding domain stretch occupies residues 910–927; that stretch reads FAEELAETVVSMATEIAA. Residues 960-983 form a disordered region; sequence LKRKKENSGTGSTVRKHKPPRLSE. Residues serine 1006, serine 1066, serine 1088, serine 1101, serine 1102, serine 1105, serine 1240, and serine 1269 each carry the phosphoserine modification. 2 disordered regions span residues 1359–1387 and 1415–1518; these read VTEGNCSPVSSPSKMAPVKKPSGFDPTRE and ETDQ…DTSS. Residues 1362–1371 are compositionally biased toward polar residues; that stretch reads GNCSPVSSPS. The segment covering 1469-1490 has biased composition (basic and acidic residues); that stretch reads LETREELEVDVLKEDITLDESR. Residues 1492 to 1504 show a composition bias toward low complexity; that stretch reads PPSSSEESTGSWS.

The protein belongs to the AKAP110 family. As to quaternary structure, interacts (via the PKA-RII subunit binding domain) with the RI subunit of PKA. Interacts with SPHK1; the interaction greatly reduces SPHK1 activity. In terms of tissue distribution, abundant in heart ventricle (at protein level).

The protein localises to the cytoplasm. Functionally, anchoring protein that binds preferentially to the type I regulatory subunit of c-AMP-dependent protein kinase (PKA type I) and targets it to distinct subcellular compartments. May act as a converging factor linking cAMP and sphingosine signaling pathways. Plays a regulatory role in the modulation of SPHK1. The protein is A-kinase anchor protein SPHKAP (Sphkap) of Rattus norvegicus (Rat).